Reading from the N-terminus, the 200-residue chain is LIM domain-containing protein WLIM2a (200 aa).

LIM zinc-binding domains lie at 8–68 and 107–167; these read QKCR…LFKE and DKCA…LFKE.

In terms of assembly, interacts with F-actin. As to expression, expressed in roots, leaves, stems, flowers and siliques. Barely detected in pollen.

It localises to the cytoplasm. The protein localises to the cytoskeleton. Functionally, binds to actin filaments and promotes cross-linking into thick bundles. Has an actin-stabilizing activity. The actin regulatory activities are not regulated by pH and [Ca(2+)]. This chain is LIM domain-containing protein WLIM2a, found in Arabidopsis thaliana (Mouse-ear cress).